A 430-amino-acid polypeptide reads, in one-letter code: Leucoanthocyanidin dioxygenase (430 aa).

One can recognise a Fe2OG dioxygenase domain in the interval 212-311 (LLLQMKINYY…RFSWAIFCEP (100 aa)). Fe cation-binding residues include H236, D238, and H292. 2 stretches are compositionally biased toward basic and acidic residues: residues 376–407 (KKDN…KEDG) and 415–430 (KVFK…EESK). Residues 376–430 (KKDNQDAVAENKDIKEDEQCGPAEHKDIKEDGQGAAAENKVFKENNQDVAAEESK) form a disordered region.

Belongs to the iron/ascorbate-dependent oxidoreductase family. Fe cation is required as a cofactor. Requires L-ascorbate as cofactor. Predominantly expressed in corollas and at lower levels in anthers.

The catalysed reaction is a (2R,3S,4S)-leucoanthocyanidin + 2-oxoglutarate + O2 = a 4-H-anthocyanidin with a 3-hydroxy group + succinate + CO2 + 2 H2O. The protein operates within pigment biosynthesis; anthocyanin biosynthesis. Functionally, oxidation of leucoanthocyanidins into anthocyanidins. The sequence is that of Leucoanthocyanidin dioxygenase (ANT17) from Petunia hybrida (Petunia).